A 421-amino-acid polypeptide reads, in one-letter code: Zinc metalloproteinase-disintegrin-like crotastatin (421 aa).

The Peptidase M12B domain occupies 10–206 (KYVKLFLVAD…NMPQCILKKP (197 aa)). The N-linked (GlcNAc...) asparagine glycan is linked to N29. Disulfide bonds link C121–C201, C161–C185, and C163–C168. Zn(2+) is bound at residue H146. E147 is a catalytic residue. Zn(2+) contacts are provided by H150 and H156. Residues 214–299 (PAVCGNYFVE…TECTDRFQRN (86 aa)) form the Disintegrin domain. Ca(2+)-binding residues include V216, N219, F221, E223, E226, and D229. 14 disulfides stabilise this stretch: C217-C246, C228-C241, C230-C236, C240-C263, C254-C260, C259-C285, C272-C292, C279-C310, C303-C315, C322-C372, C337-C383, C350-C360, C367-C409, and C403-C414. Positions 278–280 (ECD) match the D/ECD-tripeptide motif. Positions 280, 281, 283, 294, and 295 each coordinate Ca(2+).

This sequence belongs to the venom metalloproteinase (M12B) family. P-III subfamily. P-IIIc sub-subfamily. As to quaternary structure, homodimer; disulfide-linked. Zn(2+) is required as a cofactor. As to expression, expressed by the venom gland.

The protein localises to the secreted. In terms of biological role, snake venom zinc metalloprotease that induces apoptosis in vascular endothelial cells (VEC), without degrading the extracellular matrix (it cannot cleave collagen) or inhibiting adhesion of VEC. Has also fibrinogenolytic and hemorrhagic activities. The chain is Zinc metalloproteinase-disintegrin-like crotastatin from Crotalus durissus terrificus (South American rattlesnake).